We begin with the raw amino-acid sequence, 479 residues long: Bifunctional protein HldE (479 aa).

Residues 1–319 form a ribokinase region; that stretch reads MTVILPDFLK…NVVQKYEYTK (319 aa). 195–198 contributes to the ATP binding site; the sequence is NMSE. Aspartate 264 is an active-site residue. A cytidylyltransferase region spans residues 346 to 479; sequence MTNGVFDILH…IDTMEINEIN (134 aa).

This sequence in the N-terminal section; belongs to the carbohydrate kinase PfkB family. It in the C-terminal section; belongs to the cytidylyltransferase family. In terms of assembly, homodimer.

It catalyses the reaction D-glycero-beta-D-manno-heptose 7-phosphate + ATP = D-glycero-beta-D-manno-heptose 1,7-bisphosphate + ADP + H(+). The catalysed reaction is D-glycero-beta-D-manno-heptose 1-phosphate + ATP + H(+) = ADP-D-glycero-beta-D-manno-heptose + diphosphate. The protein operates within nucleotide-sugar biosynthesis; ADP-L-glycero-beta-D-manno-heptose biosynthesis; ADP-L-glycero-beta-D-manno-heptose from D-glycero-beta-D-manno-heptose 7-phosphate: step 1/4. It functions in the pathway nucleotide-sugar biosynthesis; ADP-L-glycero-beta-D-manno-heptose biosynthesis; ADP-L-glycero-beta-D-manno-heptose from D-glycero-beta-D-manno-heptose 7-phosphate: step 3/4. Catalyzes the phosphorylation of D-glycero-D-manno-heptose 7-phosphate at the C-1 position to selectively form D-glycero-beta-D-manno-heptose-1,7-bisphosphate. In terms of biological role, catalyzes the ADP transfer from ATP to D-glycero-beta-D-manno-heptose 1-phosphate, yielding ADP-D-glycero-beta-D-manno-heptose. This chain is Bifunctional protein HldE, found in Blochmanniella floridana.